Reading from the N-terminus, the 413-residue chain is Adenylosuccinate synthetase (413 aa).

GTP contacts are provided by residues 11–17 (GDEGKGK) and 39–41 (GHT). The Proton acceptor role is filled by Asp-12. Mg(2+) is bound by residues Asp-12 and Gly-39. IMP-binding positions include 12–15 (DEGK), 37–40 (NAGH), Thr-125, Arg-139, Gln-217, Thr-232, and Arg-296. His-40 serves as the catalytic Proton donor. 292-298 (TTTGRPR) serves as a coordination point for substrate. GTP is bound by residues Arg-298, 324–326 (KLD), and 402–404 (STG).

The protein belongs to the adenylosuccinate synthetase family. In terms of assembly, homodimer. Mg(2+) serves as cofactor.

It is found in the cytoplasm. It catalyses the reaction IMP + L-aspartate + GTP = N(6)-(1,2-dicarboxyethyl)-AMP + GDP + phosphate + 2 H(+). The protein operates within purine metabolism; AMP biosynthesis via de novo pathway; AMP from IMP: step 1/2. Functionally, plays an important role in the de novo pathway of purine nucleotide biosynthesis. Catalyzes the first committed step in the biosynthesis of AMP from IMP. This is Adenylosuccinate synthetase from Nautilia profundicola (strain ATCC BAA-1463 / DSM 18972 / AmH).